A 177-amino-acid chain; its full sequence is ATP-dependent protease subunit HslV (177 aa).

Thr-7 is an active-site residue. Residues Gly-162, Cys-165, and Thr-168 each contribute to the Na(+) site.

Belongs to the peptidase T1B family. HslV subfamily. A double ring-shaped homohexamer of HslV is capped on each side by a ring-shaped HslU homohexamer. The assembly of the HslU/HslV complex is dependent on binding of ATP.

It localises to the cytoplasm. The enzyme catalyses ATP-dependent cleavage of peptide bonds with broad specificity.. Its activity is regulated as follows. Allosterically activated by HslU binding. In terms of biological role, protease subunit of a proteasome-like degradation complex believed to be a general protein degrading machinery. This chain is ATP-dependent protease subunit HslV, found in Persephonella marina (strain DSM 14350 / EX-H1).